Consider the following 858-residue polypeptide: Elongation factor 2 (858 aa).

In terms of domain architecture, tr-type G spans 17 to 362 (ANIRNMSVIA…MITIHLPSPV (346 aa)). 26 to 33 (AHVDHGKS) contacts GTP. Thr54 carries the post-translational modification Phosphothreonine. Thr57 bears the Phosphothreonine; by EEF2K mark. Thr59 is subject to Phosphothreonine. N6-succinyllysine is present on Lys152. Residues 158–161 (NKMD) and 216–218 (SGL) each bind GTP. Position 235 is an N6-acetyllysine (Lys235). At Lys239 the chain carries N6-acetyllysine; alternate. Lys239 participates in a covalent cross-link: Glycyl lysine isopeptide (Lys-Gly) (interchain with G-Cter in SUMO1); alternate. A Phosphotyrosine; by CSK modification is found at Tyr265. N6-acetyllysine; alternate is present on Lys272. Position 272 is an N6-succinyllysine; alternate (Lys272). Lys275 carries the post-translational modification N6-acetyllysine. Lys322 is covalently cross-linked (Glycyl lysine isopeptide (Lys-Gly) (interchain with G-Cter in SUMO)). A Phosphoserine modification is found at Ser325. Phosphotyrosine; by CSK is present on Tyr373. At Thr435 the chain carries Phosphothreonine. N6-acetyllysine occurs at positions 439 and 445. Ser502 is modified (phosphoserine). The residue at position 525 (Lys525) is an N6,N6,N6-trimethyllysine; by EEF2KMT. A Glycyl lysine isopeptide (Lys-Gly) (interchain with G-Cter in SUMO) cross-link involves residue Lys529. Position 572 is an N6-succinyllysine (Lys572). Residue Ser595 is modified to Phosphoserine; by CDK2. At Lys619 the chain carries N6-acetyllysine. His715 carries the post-translational modification Diphthamide.

It belongs to the TRAFAC class translation factor GTPase superfamily. Classic translation factor GTPase family. EF-G/EF-2 subfamily. Binds to 80S ribosomes. Actively translating ribosomes show mutually exclusive binding of eIF5a (EIF5A or EIF5A2) and EEF2/eEF2. Interacts with SERBP1; interaction sequesters EEF2/eEF2 at the A-site of the ribosome, thereby blocking the interaction sites of the mRNA-tRNA complex, promoting ribosome stabilization and hibernation. Interacts with HABP4; interaction takes place at the A-site of hibernating ribosomes and promotes ribosome stabilization. Component of the mRNA surveillance SURF complex, at least composed of ERF1, ERF3 (ERF3A or ERF3B), EEF2, UPF1/RENT1, SMG1, SMG8 and SMG9. Interacts with RBPMS2. In terms of processing, phosphorylation by EF-2 kinase completely inactivates EF-2; it requires prior phosphorylation by CDK2 at Ser-595 during mitotic prometaphase. Phosphorylation by CSK promotes SUMOylation, proteolytic cleavage, and nuclear translocation if the C-terminal fragment. Post-translationally, diphthamide is 2-[3-carboxyamido-3-(trimethyl-ammonio)propyl]histidine. ISGylated. In terms of processing, proteolytically processed at two sites following phosphorylation by CSK. Post-translationally, SUMOylated following phosphorylation by CSK, promotes proteolytic cleavage.

The protein localises to the cytoplasm. Its subcellular location is the nucleus. It carries out the reaction GTP + H2O = GDP + phosphate + H(+). Catalyzes the GTP-dependent ribosomal translocation step during translation elongation. During this step, the ribosome changes from the pre-translocational (PRE) to the post-translocational (POST) state as the newly formed A-site-bound peptidyl-tRNA and P-site-bound deacylated tRNA move to the P and E sites, respectively. Catalyzes the coordinated movement of the two tRNA molecules, the mRNA and conformational changes in the ribosome. This chain is Elongation factor 2 (EEF2), found in Bos taurus (Bovine).